The primary structure comprises 455 residues: L-serine dehydratase (455 aa).

The protein belongs to the iron-sulfur dependent L-serine dehydratase family. [4Fe-4S] cluster is required as a cofactor.

It catalyses the reaction L-serine = pyruvate + NH4(+). The protein operates within carbohydrate biosynthesis; gluconeogenesis. The sequence is that of L-serine dehydratase (sdaA) from Streptomyces coelicolor (strain ATCC BAA-471 / A3(2) / M145).